Here is an 83-residue protein sequence, read N- to C-terminus: Cell division topological specificity factor (83 aa).

The protein belongs to the MinE family.

Prevents the cell division inhibition by proteins MinC and MinD at internal division sites while permitting inhibition at polar sites. This ensures cell division at the proper site by restricting the formation of a division septum at the midpoint of the long axis of the cell. The polypeptide is Cell division topological specificity factor (Buchnera aphidicola subsp. Acyrthosiphon pisum (strain 5A)).